Consider the following 146-residue polypeptide: Holo-[acyl-carrier-protein] synthase (146 aa).

The Mg(2+) site is built by Asp-9 and Glu-63.

Belongs to the P-Pant transferase superfamily. AcpS family. Mg(2+) is required as a cofactor.

The protein localises to the cytoplasm. It catalyses the reaction apo-[ACP] + CoA = holo-[ACP] + adenosine 3',5'-bisphosphate + H(+). Its function is as follows. Transfers the 4'-phosphopantetheine moiety from coenzyme A to a Ser of acyl-carrier-protein. The polypeptide is Holo-[acyl-carrier-protein] synthase (Burkholderia ambifaria (strain MC40-6)).